A 448-amino-acid polypeptide reads, in one-letter code: tRNA(Ile)-lysidine synthase (448 aa).

Residue 28-33 (STGVDS) participates in ATP binding.

It belongs to the tRNA(Ile)-lysidine synthase family.

It is found in the cytoplasm. It catalyses the reaction cytidine(34) in tRNA(Ile2) + L-lysine + ATP = lysidine(34) in tRNA(Ile2) + AMP + diphosphate + H(+). Functionally, ligates lysine onto the cytidine present at position 34 of the AUA codon-specific tRNA(Ile) that contains the anticodon CAU, in an ATP-dependent manner. Cytidine is converted to lysidine, thus changing the amino acid specificity of the tRNA from methionine to isoleucine. This Lactiplantibacillus plantarum (strain ATCC BAA-793 / NCIMB 8826 / WCFS1) (Lactobacillus plantarum) protein is tRNA(Ile)-lysidine synthase.